The sequence spans 456 residues: Putative F-box/LRR-repeat protein At5g02700 (456 aa).

Positions 26–72 (ADFINYMPDDILHHILSFIPTDLAMRTSVLSRRWRHVWCETPCLDIT) constitute an F-box domain. LRR repeat units follow at residues 126–154 (VRDF…DVTL), 177–202 (FCQI…TLDT), 206–224 (LERL…DINQ), 271–300 (LSPL…TVGE), and 330–355 (FVRS…RPST).

The chain is Putative F-box/LRR-repeat protein At5g02700 from Arabidopsis thaliana (Mouse-ear cress).